Here is a 621-residue protein sequence, read N- to C-terminus: MALLQISEPGMSPAPHQRRLAVGIDLGTTNSLVAAVRNSIPEVLGDERGRALLPSVVRYLPDRTTHIGYRAQDEAVRDPKNTIVSVKRFMGRGLKDVAHNEHSPYDFVDAPGMVQIKTVAGVKSPVEVSAEILATLRQRAEDSLGDDLVGAVITVPAYFDEAQRQATKDAARLAGLEVLRLLNEPTAAAIAYGLDNASEGIYAVYDLGGGTFDISILKLTKGVFEVLSTGGDSALGGDDFDQRLLCWIVEQAGLQPLSAQDMRLLMVRARAAKEALSEGDSTVIDAVLDSGEIVHLTLTDEIFDTITAHLVQKTLAPVRKALRDAGVTPDEVQGVVLVGGATRMPAIRKAVGDFFGQPPLTNLDPDRVVALGAAMQANLLAGNHAPGEDWLLLDVIPLSLGVETMGGLVEKIIPRNSTIPVARAQEFTTFKDGQTAMAIHVLQGERELASDCRSLARFELRGIPPMVAGAARIRVTYQVDADGLLSVTARETHSGVESSVTVKPSYGLADDDIARMLQEGFREAEHDMKSRALAEERVEADRLVEATTRALETDGDLLSADERAAVEALIASVREIATGEDHHAIKAAVETLSRGTDEFAARRMDRSIKSALAGRKVQELG.

The protein belongs to the heat shock protein 70 family.

Chaperone involved in the maturation of iron-sulfur cluster-containing proteins. Has a low intrinsic ATPase activity which is markedly stimulated by HscB. This Cupriavidus pinatubonensis (strain JMP 134 / LMG 1197) (Cupriavidus necator (strain JMP 134)) protein is Chaperone protein HscA homolog.